The primary structure comprises 300 residues: Cytochrome b (300 aa).

6 helical membrane-spanning segments follow: residues 28–48, 72–94, 107–127, 168–187, 223–243, and 279–299; these read YGFL…LLAL, WCFR…LHIL, SWIS…YGYV, FFVF…FGIL, IPNK…LFLL, and IGCQ…YIIL. 2 residues coordinate heme b: histidine 78 and histidine 92.

Belongs to the cytochrome b family. In terms of assembly, the main subunits of complex b-c1 are: cytochrome b, cytochrome c1 and the Rieske protein. It depends on heme b as a cofactor.

The protein resides in the mitochondrion inner membrane. Functionally, component of the ubiquinol-cytochrome c reductase complex (complex III or cytochrome b-c1 complex) that is part of the mitochondrial respiratory chain. The b-c1 complex mediates electron transfer from ubiquinol to cytochrome c. Contributes to the generation of a proton gradient across the mitochondrial membrane that is then used for ATP synthesis. The polypeptide is Cytochrome b (MT-CYB) (Plasmodium gallinaceum).